The chain runs to 90 residues: Probable Fe(2+)-trafficking protein (90 aa).

The protein belongs to the Fe(2+)-trafficking protein family.

In terms of biological role, could be a mediator in iron transactions between iron acquisition and iron-requiring processes, such as synthesis and/or repair of Fe-S clusters in biosynthetic enzymes. This chain is Probable Fe(2+)-trafficking protein, found in Pseudomonas fluorescens (strain ATCC BAA-477 / NRRL B-23932 / Pf-5).